A 91-amino-acid polypeptide reads, in one-letter code: MNFFTMCVFGAAIGMAIGTLGTAIGQGMAVKSAVEGVARNPGAASKIMTTMMIGLAMIESLAIYALVVCLIILFANPYKDIALKMVETVAK.

2 helical membrane-spanning segments follow: residues 4-24 (FTMCVFGAAIGMAIGTLGTAI) and 53-73 (IGLAMIESLAIYALVVCLIIL).

It belongs to the ATPase C chain family. F-type ATPases have 2 components, F(1) - the catalytic core - and F(0) - the membrane proton channel. F(1) has five subunits: alpha(3), beta(3), gamma(1), delta(1), epsilon(1). F(0) has three main subunits: a(1), b(2) and c(10-14). The alpha and beta chains form an alternating ring which encloses part of the gamma chain. F(1) is attached to F(0) by a central stalk formed by the gamma and epsilon chains, while a peripheral stalk is formed by the delta and b chains.

It is found in the cell inner membrane. In terms of biological role, f(1)F(0) ATP synthase produces ATP from ADP in the presence of a proton or sodium gradient. F-type ATPases consist of two structural domains, F(1) containing the extramembraneous catalytic core and F(0) containing the membrane proton channel, linked together by a central stalk and a peripheral stalk. During catalysis, ATP synthesis in the catalytic domain of F(1) is coupled via a rotary mechanism of the central stalk subunits to proton translocation. Its function is as follows. Key component of the F(0) channel; it plays a direct role in translocation across the membrane. A homomeric c-ring of between 10-14 subunits forms the central stalk rotor element with the F(1) delta and epsilon subunits. The chain is ATP synthase subunit c 1 from Pelobacter propionicus (strain DSM 2379 / NBRC 103807 / OttBd1).